The chain runs to 371 residues: 2-aminoethylphosphonate--pyruvate transaminase (371 aa).

The residue at position 198 (K198) is an N6-(pyridoxal phosphate)lysine.

It belongs to the class-V pyridoxal-phosphate-dependent aminotransferase family. PhnW subfamily. In terms of assembly, homodimer. Pyridoxal 5'-phosphate serves as cofactor.

The catalysed reaction is (2-aminoethyl)phosphonate + pyruvate = phosphonoacetaldehyde + L-alanine. In terms of biological role, involved in phosphonate degradation. This Syntrophobacter fumaroxidans (strain DSM 10017 / MPOB) protein is 2-aminoethylphosphonate--pyruvate transaminase.